Reading from the N-terminus, the 269-residue chain is Tryptophan synthase alpha chain (269 aa).

Catalysis depends on proton acceptor residues E49 and D60.

Belongs to the TrpA family. In terms of assembly, tetramer of two alpha and two beta chains.

The enzyme catalyses (1S,2R)-1-C-(indol-3-yl)glycerol 3-phosphate + L-serine = D-glyceraldehyde 3-phosphate + L-tryptophan + H2O. It participates in amino-acid biosynthesis; L-tryptophan biosynthesis; L-tryptophan from chorismate: step 5/5. In terms of biological role, the alpha subunit is responsible for the aldol cleavage of indoleglycerol phosphate to indole and glyceraldehyde 3-phosphate. This Pseudomonas putida (strain GB-1) protein is Tryptophan synthase alpha chain.